The sequence spans 285 residues: MMSDYSWFEGIPLPDMWVQKEIVEDVHNKFVVKDEDLIILTYPKSGTNWLIEIVCLIQTKGDPKWIQSVPNWERSPWLESKSGYSVLTSKEGPRLMTSHLPIHLFSKSFFSSKAKVIYLIRNPRDVLVSGYFFWANTNLVKNLESLGIYFEQFLKGNVRYGSWFEHIHGWLSMRERNNFLVLYYEDMKKDAKGTIKKICDFLGKNLGPDELDLVLKYSSFQAMKENNMSNYSLIKEDQITNGLKLMRKGTTGDWKNHFTVAQTEAFDKVFQDKMVGFPPGMFPWE.

44-49 (KSGTNW) provides a ligand contact to 3'-phosphoadenylyl sulfate. His-99 (proton acceptor) is an active-site residue. Residues Arg-121, Ser-129, Tyr-184, 218-223 (SSFQAM), and 247-249 (RKG) each bind 3'-phosphoadenylyl sulfate.

Belongs to the sulfotransferase 1 family. In terms of assembly, oligomer.

Its subcellular location is the cytoplasm. It is found in the cytosol. The catalysed reaction is an alcohol + 3'-phosphoadenylyl sulfate = an alkyl sulfate + adenosine 3',5'-bisphosphate + H(+). It catalyses the reaction glycolithocholate + 3'-phosphoadenylyl sulfate = sulfoglycolithocholate + adenosine 3',5'-bisphosphate + H(+). The enzyme catalyses taurolithocholate + 3'-phosphoadenylyl sulfate = taurolithocholate 3-sulfate + adenosine 3',5'-bisphosphate + H(+). It carries out the reaction 3beta-hydroxyandrost-5-en-17-one + 3'-phosphoadenylyl sulfate = dehydroepiandrosterone 3-sulfate + adenosine 3',5'-bisphosphate + H(+). Its function is as follows. Sulfotransferase that utilizes 3'-phospho-5'-adenylyl sulfate (PAPS) as sulfonate donor to catalyze the sulfonation of the hydroxyl group of hydroxysteroids and bile acids. This chain is Sulfotransferase 2A6, found in Mus musculus (Mouse).